Consider the following 270-residue polypeptide: tRNA pseudouridine synthase A (270 aa).

Catalysis depends on Asp-60, which acts as the Nucleophile. The RNA binding stretch occupies residues 107–111; that stretch reads FHARF. Tyr-118 is a binding site for substrate. Residues 168-172 form an interaction with tRNA region; it reads QCQSR.

This sequence belongs to the tRNA pseudouridine synthase TruA family. As to quaternary structure, homodimer.

The catalysed reaction is uridine(38/39/40) in tRNA = pseudouridine(38/39/40) in tRNA. Formation of pseudouridine at positions 38, 39 and 40 in the anticodon stem and loop of transfer RNAs. The polypeptide is tRNA pseudouridine synthase A (Shigella boydii serotype 4 (strain Sb227)).